An 822-amino-acid polypeptide reads, in one-letter code: Sushi domain-containing protein 2 (822 aa).

Residues 1–27 (MKPALLPWALLLLATALGPGPGPTADA) form the signal peptide. The region spanning 28-66 (QESCSMRCGALDGPCSCHPTCSGLGTCCLDFRDFCLEIL) is the SMB domain. Residues 28-785 (QESCSMRCGA…PKCQPGRSYA (758 aa)) lie on the Extracellular side of the membrane. Cystine bridges form between cysteine 31/cysteine 35, cysteine 31/cysteine 44, cysteine 35/cysteine 62, cysteine 42/cysteine 44, cysteine 42/cysteine 55, cysteine 48/cysteine 54, and cysteine 55/cysteine 62. N-linked (GlcNAc...) asparagine glycosylation is found at asparagine 162 and asparagine 177. One can recognise an AMOP domain in the interval 285 to 433 (PVAWARTQCQ…PDCPRYMQRR (149 aa)). The VWFD domain occupies 445 to 639 (RLASAFGDPH…NWTVHNASSL (195 aa)). Residue asparagine 522 is glycosylated (N-linked (GlcNAc...) asparagine). The Sushi domain maps to 723–780 (VSCGWLAPPPNGQKEGNRYLAGSTIYFHCDNGYSLAGAETSTCQADGTWSSPTPKCQP). Intrachain disulfides connect cysteine 725-cysteine 765 and cysteine 751-cysteine 778. The chain crosses the membrane as a helical span at residues 786–806 (VLLGIIFGGLAVVAAVALVYV). The Cytoplasmic portion of the chain corresponds to 807–822 (LLRRRKGNTHVWGAQP).

As to quaternary structure, interacts with LGALS1; leads to an increased amount of LGALS1 on the cell surface. Interacts with GPR15LG; the interaction is direct. As to expression, highly expressed in breast cancer, but shows a restricted expression pattern in normal tissues such as adipose, adrenal gland, kidney, lung, mammary gland, placenta, thyroid, trachea, and uterus. Also expressed in colon; down-regulated in colon cancer tissues.

The protein resides in the cell membrane. Functionally, may be a cytokine receptor for GPR15LG. May be a tumor suppressor; together with GPR15LG has a growth inhibitory effect on colon cancer cells which includes G1 cell cycle arrest. May play a role in breast tumorigenesis. In Homo sapiens (Human), this protein is Sushi domain-containing protein 2 (SUSD2).